A 211-amino-acid polypeptide reads, in one-letter code: Uracil phosphoribosyltransferase (211 aa).

5-phospho-alpha-D-ribose 1-diphosphate-binding positions include Arg-78, Arg-103, and 130–138; that span reads DPMLATGGT. Uracil-binding positions include Ile-195 and 200–202; that span reads GDA. 5-phospho-alpha-D-ribose 1-diphosphate is bound at residue Asp-201.

The protein belongs to the UPRTase family. Mg(2+) serves as cofactor.

The catalysed reaction is UMP + diphosphate = 5-phospho-alpha-D-ribose 1-diphosphate + uracil. It participates in pyrimidine metabolism; UMP biosynthesis via salvage pathway; UMP from uracil: step 1/1. With respect to regulation, allosterically activated by GTP. In terms of biological role, catalyzes the conversion of uracil and 5-phospho-alpha-D-ribose 1-diphosphate (PRPP) to UMP and diphosphate. In Arthrobacter sp. (strain FB24), this protein is Uracil phosphoribosyltransferase.